Reading from the N-terminus, the 65-residue chain is Large ribosomal subunit protein bL33 (65 aa).

The segment at 20–40 (VPPSEKRSPGVSRYTTEKNRR) is disordered.

Belongs to the bacterial ribosomal protein bL33 family.

This Prochlorococcus marinus (strain MIT 9211) protein is Large ribosomal subunit protein bL33.